A 405-amino-acid chain; its full sequence is Cystathionine gamma-lyase (405 aa).

Substrate is bound by residues Arg-62, Tyr-114, and Arg-119. Lys-212 is subject to N6-(pyridoxal phosphate)lysine. Glu-339 contacts substrate.

This sequence belongs to the trans-sulfuration enzymes family. In terms of assembly, homotetramer. Interacts with CALM in a calcium-dependent manner. It depends on pyridoxal 5'-phosphate as a cofactor.

It is found in the cytoplasm. The catalysed reaction is L,L-cystathionine + H2O = 2-oxobutanoate + L-cysteine + NH4(+). It functions in the pathway amino-acid biosynthesis; L-cysteine biosynthesis; L-cysteine from L-homocysteine and L-serine: step 2/2. Its function is as follows. Catalyzes the last step in the trans-sulfuration pathway from methionine to cysteine. Has broad substrate specificity. Converts cystathionine to cysteine, ammonia and 2-oxobutanoate. Converts two cysteine molecules to lanthionine and hydrogen sulfide. Can also accept homocysteine as substrate. Specificity depends on the levels of the endogenous substrates. Generates the endogenous signaling molecule hydrogen sulfide (H2S), and so contributes to the regulation of blood pressure. Acts as a cysteine-protein sulfhydrase by mediating sulfhydration of target proteins: sulfhydration consists of converting -SH groups into -SSH on specific cysteine residues of target proteins such as GAPDH, PTPN1 and NF-kappa-B subunit RELA, thereby regulating their function. The polypeptide is Cystathionine gamma-lyase (CTH) (Bos taurus (Bovine)).